Consider the following 236-residue polypeptide: Orotidine 5'-phosphate decarboxylase (236 aa).

Residues aspartate 16, lysine 38, 65–74 (DLKYHDIPNT), threonine 124, arginine 185, glutamine 194, glycine 214, and arginine 215 contribute to the substrate site. Residue lysine 67 is the Proton donor of the active site.

The protein belongs to the OMP decarboxylase family. Type 1 subfamily. As to quaternary structure, homodimer.

The enzyme catalyses orotidine 5'-phosphate + H(+) = UMP + CO2. Its pathway is pyrimidine metabolism; UMP biosynthesis via de novo pathway; UMP from orotate: step 2/2. Its function is as follows. Catalyzes the decarboxylation of orotidine 5'-monophosphate (OMP) to uridine 5'-monophosphate (UMP). This chain is Orotidine 5'-phosphate decarboxylase, found in Hydrogenovibrio crunogenus (strain DSM 25203 / XCL-2) (Thiomicrospira crunogena).